The primary structure comprises 1241 residues: ATP-dependent helicase/nuclease subunit A (1241 aa).

The UvrD-like helicase ATP-binding domain occupies 12–485 (SQWTDDQWKA…IDLAKNFRSR (474 aa)). 33 to 40 (AAAGSGKT) is an ATP binding site. In terms of domain architecture, UvrD-like helicase C-terminal spans 505–805 (GEIDYDADAE…RIMTIHKSKG (301 aa)).

The protein belongs to the helicase family. AddA subfamily. Heterodimer of AddA and AddB/RexB. Requires Mg(2+) as cofactor.

It carries out the reaction Couples ATP hydrolysis with the unwinding of duplex DNA by translocating in the 3'-5' direction.. It catalyses the reaction ATP + H2O = ADP + phosphate + H(+). The heterodimer acts as both an ATP-dependent DNA helicase and an ATP-dependent, dual-direction single-stranded exonuclease. Recognizes the chi site generating a DNA molecule suitable for the initiation of homologous recombination. The AddA nuclease domain is required for chi fragment generation; this subunit has the helicase and 3' -&gt; 5' nuclease activities. This is ATP-dependent helicase/nuclease subunit A from Bacillus thuringiensis (strain Al Hakam).